A 63-amino-acid polypeptide reads, in one-letter code: Sec-independent protein translocase protein TatA (63 aa).

A helical transmembrane segment spans residues 1–21 (MGSFSMWHWLIVLVIVLLLFG). The segment at 42 to 63 (GMTDDDAPDTAKTVDHKADETK) is disordered. The span at 53–63 (KTVDHKADETK) shows a compositional bias: basic and acidic residues.

The protein belongs to the TatA/E family. The Tat system comprises two distinct complexes: a TatABC complex, containing multiple copies of TatA, TatB and TatC subunits, and a separate TatA complex, containing only TatA subunits. Substrates initially bind to the TatABC complex, which probably triggers association of the separate TatA complex to form the active translocon.

It localises to the cell inner membrane. Its function is as follows. Part of the twin-arginine translocation (Tat) system that transports large folded proteins containing a characteristic twin-arginine motif in their signal peptide across membranes. TatA could form the protein-conducting channel of the Tat system. The protein is Sec-independent protein translocase protein TatA of Rhizobium etli (strain CIAT 652).